A 565-amino-acid polypeptide reads, in one-letter code: Deoxyribodipyrimidine photo-lyase, mitochondrial (565 aa).

One can recognise a Photolyase/cryptochrome alpha/beta domain in the interval 75–226; it reads STVMHWFRND…QLKYYHDSCI (152 aa). Residues Tyr-326 and 338 to 342 each bind FAD; that span reads TSGLS. 2 interaction with DNA regions span residues 384-391 and 451-452; these read EVAWRDFY and NR. Residue 482–484 participates in FAD binding; the sequence is DGD. Residue Gln-514 participates in DNA binding.

It belongs to the DNA photolyase class-1 family. As to quaternary structure, monomer. FAD serves as cofactor. The cofactor is (6R)-5,10-methylene-5,6,7,8-tetrahydrofolate.

Its subcellular location is the nucleus. The protein resides in the mitochondrion. The catalysed reaction is cyclobutadipyrimidine (in DNA) = 2 pyrimidine residues (in DNA).. In terms of biological role, involved in repair of UV radiation-induced DNA damage. Catalyzes the light-dependent monomerization (300-600 nm) of cyclobutyl pyrimidine dimers (in cis-syn configuration), which are formed between adjacent bases on the same DNA strand upon exposure to ultraviolet radiation. This is Deoxyribodipyrimidine photo-lyase, mitochondrial (PHR1) from Saccharomyces cerevisiae (strain ATCC 204508 / S288c) (Baker's yeast).